A 129-amino-acid chain; its full sequence is Small ribosomal subunit protein uS11 (129 aa).

This sequence belongs to the universal ribosomal protein uS11 family. As to quaternary structure, part of the 30S ribosomal subunit. Interacts with proteins S7 and S18. Binds to IF-3.

Located on the platform of the 30S subunit, it bridges several disparate RNA helices of the 16S rRNA. Forms part of the Shine-Dalgarno cleft in the 70S ribosome. In Dinoroseobacter shibae (strain DSM 16493 / NCIMB 14021 / DFL 12), this protein is Small ribosomal subunit protein uS11.